A 405-amino-acid polypeptide reads, in one-letter code: Cystathionine gamma-lyase (405 aa).

Substrate-binding residues include Arg62, Tyr114, and Arg119. Lys212 is modified (N6-(pyridoxal phosphate)lysine). Glu339 contacts substrate.

Belongs to the trans-sulfuration enzymes family. As to quaternary structure, homotetramer. Interacts with CALM in a calcium-dependent manner. Pyridoxal 5'-phosphate serves as cofactor.

Its subcellular location is the cytoplasm. The catalysed reaction is L,L-cystathionine + H2O = 2-oxobutanoate + L-cysteine + NH4(+). Its pathway is amino-acid biosynthesis; L-cysteine biosynthesis; L-cysteine from L-homocysteine and L-serine: step 2/2. Functionally, catalyzes the last step in the trans-sulfuration pathway from methionine to cysteine. Has broad substrate specificity. Converts cystathionine to cysteine, ammonia and 2-oxobutanoate. Converts two cysteine molecules to lanthionine and hydrogen sulfide. Can also accept homocysteine as substrate. Specificity depends on the levels of the endogenous substrates. Generates the endogenous signaling molecule hydrogen sulfide (H2S), and so contributes to the regulation of blood pressure. Acts as a cysteine-protein sulfhydrase by mediating sulfhydration of target proteins: sulfhydration consists of converting -SH groups into -SSH on specific cysteine residues of target proteins such as GAPDH, PTPN1 and NF-kappa-B subunit RELA, thereby regulating their function. The polypeptide is Cystathionine gamma-lyase (CTH) (Bos taurus (Bovine)).